We begin with the raw amino-acid sequence, 302 residues long: Sulfate adenylyltransferase subunit 2 (302 aa).

The interval R280–F302 is disordered.

Belongs to the PAPS reductase family. CysD subfamily. Heterodimer composed of CysD, the smaller subunit, and CysN.

The catalysed reaction is sulfate + ATP + H(+) = adenosine 5'-phosphosulfate + diphosphate. It participates in sulfur metabolism; hydrogen sulfide biosynthesis; sulfite from sulfate: step 1/3. With CysN forms the ATP sulfurylase (ATPS) that catalyzes the adenylation of sulfate producing adenosine 5'-phosphosulfate (APS) and diphosphate, the first enzymatic step in sulfur assimilation pathway. APS synthesis involves the formation of a high-energy phosphoric-sulfuric acid anhydride bond driven by GTP hydrolysis by CysN coupled to ATP hydrolysis by CysD. The chain is Sulfate adenylyltransferase subunit 2 from Vibrio vulnificus (strain CMCP6).